The sequence spans 315 residues: tRNA U34 carboxymethyltransferase (315 aa).

Residues Lys79, Trp93, Lys98, Gly117, 142–144 (DPS), 169–170 (VE), Tyr193, and Arg307 contribute to the carboxy-S-adenosyl-L-methionine site.

Belongs to the class I-like SAM-binding methyltransferase superfamily. CmoB family. As to quaternary structure, homotetramer.

The enzyme catalyses carboxy-S-adenosyl-L-methionine + 5-hydroxyuridine(34) in tRNA = 5-carboxymethoxyuridine(34) in tRNA + S-adenosyl-L-homocysteine + H(+). Its function is as follows. Catalyzes carboxymethyl transfer from carboxy-S-adenosyl-L-methionine (Cx-SAM) to 5-hydroxyuridine (ho5U) to form 5-carboxymethoxyuridine (cmo5U) at position 34 in tRNAs. The chain is tRNA U34 carboxymethyltransferase from Helicobacter hepaticus (strain ATCC 51449 / 3B1).